Consider the following 417-residue polypeptide: Tyrosine--tRNA ligase (417 aa).

Position 39 (Y39) interacts with L-tyrosine. The 'HIGH' region signature appears at P44–G53. 2 residues coordinate L-tyrosine: Y176 and Q180. The short motif at K236–S240 is the 'KMSKS' region element. ATP is bound at residue K239. The region spanning L350–V417 is the S4 RNA-binding domain.

The protein belongs to the class-I aminoacyl-tRNA synthetase family. TyrS type 1 subfamily. Homodimer.

It localises to the cytoplasm. The enzyme catalyses tRNA(Tyr) + L-tyrosine + ATP = L-tyrosyl-tRNA(Tyr) + AMP + diphosphate + H(+). In terms of biological role, catalyzes the attachment of tyrosine to tRNA(Tyr) in a two-step reaction: tyrosine is first activated by ATP to form Tyr-AMP and then transferred to the acceptor end of tRNA(Tyr). This is Tyrosine--tRNA ligase from Rhizobium meliloti (strain 1021) (Ensifer meliloti).